The chain runs to 825 residues: MRNKLRRLLAIMMAVLLITSLFAPMVSAEEGDNGDDDDLVTPIEIEERPHESNYEKYPALLDGGLDERRPSEAGALQLVEVDGQVTLADQDGVPIQLRGMSTHGLQWFGEIVNENAFAALANDWGSNVIRLALYIGENAYRYNPDLIEKVYAGIELAKENDMYVIIDWHVHAPGDPNADIYQGGVNEDGEEYLGAKDFFLHIAEKYPNDPHLIYELANEPSSNSSGGPGITNDEDGWEAVREYAQPIVDALRDSGNAEDNIIIVGSPNWSQRMDLAAADNPIDDHHTMYTLHFYTGTHEGTNESYPEGISSEDRSNVMANAKYALDKGKAIFATEWGVSEADGNNGPYLNEADVWLNFLNENNISWTNWSLTNKNETSGAFTPFILNESDATDLDPGEDQVWSMEELSVSGEYVRSRILGEEYQPIDRTPREEFSEVIWDFNDGTTQGFVQNSDSPLDVTIENVNDALQITGLDESNAIAGEEEDYWSNVRISADEWEETFDILGAEELSMDVVVDDPTTVAIAAIPQSSAHEWANASNSVLITEDDFEEQEDGTYKALLTITGEDAPNLTNIAEDPEGSELNNIILFVGTENADVISLDNITVTGDRESVPEPVEHDTKGDSALPSDFEDGTRQGWEWDSESAVRTALTIEEANGSNALSWEYAYPEVKPSDDWATAPRLTLYKDDLVRGDYEFVAFDFYIDPIEDRATEGAIDINLIFQPPAAGYWAQASETFEIDLEELDSATVTDDGLYHYEVEINIEDIENDIELRNLMLIFADDESDFAGRVFLDNVRMDMSLETKVEVLERNINELQEQLVEVEALMR.

An N-terminal signal peptide occupies residues 1–28 (MRNKLRRLLAIMMAVLLITSLFAPMVSA). Glu-219 (proton donor) is an active-site residue. The active-site Nucleophile is Glu-335. The span at 607 to 621 (DRESVPEPVEHDTKG) shows a compositional bias: basic and acidic residues. The interval 607–635 (DRESVPEPVEHDTKGDSALPSDFEDGTRQ) is disordered.

It belongs to the glycosyl hydrolase 5 (cellulase A) family.

It catalyses the reaction Endohydrolysis of (1-&gt;4)-beta-D-glucosidic linkages in cellulose, lichenin and cereal beta-D-glucans.. The polypeptide is Endoglucanase C (celC) (Evansella cellulosilytica (strain ATCC 21833 / DSM 2522 / FERM P-1141 / JCM 9156 / N-4) (Bacillus cellulosilyticus)).